The following is a 396-amino-acid chain: Imidazolonepropionase (396 aa).

Fe(3+)-binding residues include histidine 69 and histidine 71. 2 residues coordinate Zn(2+): histidine 69 and histidine 71. 3 residues coordinate 4-imidazolone-5-propanoate: arginine 78, tyrosine 136, and histidine 163. Tyrosine 136 lines the N-formimidoyl-L-glutamate pocket. Histidine 224 contacts Fe(3+). Histidine 224 contributes to the Zn(2+) binding site. Glutamine 227 is a binding site for 4-imidazolone-5-propanoate. Aspartate 298 contributes to the Fe(3+) binding site. Aspartate 298 is a Zn(2+) binding site. Positions 300 and 302 each coordinate N-formimidoyl-L-glutamate. Threonine 303 contributes to the 4-imidazolone-5-propanoate binding site.

This sequence belongs to the metallo-dependent hydrolases superfamily. HutI family. Zn(2+) is required as a cofactor. It depends on Fe(3+) as a cofactor.

It localises to the cytoplasm. It carries out the reaction 4-imidazolone-5-propanoate + H2O = N-formimidoyl-L-glutamate. It functions in the pathway amino-acid degradation; L-histidine degradation into L-glutamate; N-formimidoyl-L-glutamate from L-histidine: step 3/3. In terms of biological role, catalyzes the hydrolytic cleavage of the carbon-nitrogen bond in imidazolone-5-propanoate to yield N-formimidoyl-L-glutamate. It is the third step in the universal histidine degradation pathway. This Cutibacterium acnes (strain DSM 16379 / KPA171202) (Propionibacterium acnes) protein is Imidazolonepropionase.